Here is a 178-residue protein sequence, read N- to C-terminus: UPF0114 protein in repA1-repA2 intergenic region (178 aa).

Helical transmembrane passes span 14–34 (WLIFPIYLGLSFCLILLTLKF), 53–73 (LILVILSLIDIVLVGGLLVMV), and 136–156 (WYVIIHLTFVVSAGGMAYIDR).

It belongs to the UPF0114 family.

The protein resides in the cell membrane. The sequence is that of UPF0114 protein in repA1-repA2 intergenic region from Buchnera aphidicola subsp. Tetraneura caerulescens.